A 536-amino-acid polypeptide reads, in one-letter code: Heat shock factor protein 2 (536 aa).

Residues Lys2 and Lys82 each participate in a glycyl lysine isopeptide (Lys-Gly) (interchain with G-Cter in SUMO2) cross-link. A DNA-binding region spans residues 7 to 112 (VPAFLSKLWT…LLENIKRKVS (106 aa)). Positions 108-122 (KRKVSSSKPEENKIR) match the Nuclear localization signal motif. A hydrophobic repeat HR-A/B region spans residues 119–192 (NKIRQEDLTK…VTLVQNNQLV (74 aa)). Glycyl lysine isopeptide (Lys-Gly) (interchain with G-Cter in SUMO2) cross-links involve residues Lys135, Lys139, Lys151, Lys210, Lys218, and Lys237. The Nuclear localization signal motif lies at 195–210 (KRKRPLLLNTNGAQKK). Positions 300–337 (QSGEQNEPARESLSSGSDGSSPLMSSAVQLNGSSSLTS) are disordered. A compositionally biased stretch (low complexity) spans 311–325 (SLSSGSDGSSPLMSS). Over residues 326-337 (AVQLNGSSSLTS) the composition is skewed to polar residues. Residues 360–385 (LLDYLDSIDCSLEDFQAMLSGRQFSI) form a hydrophobic repeat HR-C region. The tract at residues 407–438 (NNTKSENKGLETTKNNVVQPVSEEGRKSKSKP) is disordered. Residues 429–438 (EEGRKSKSKP) show a composition bias toward basic and acidic residues.

The protein belongs to the HSF family. As to quaternary structure, DNA-binding homotrimer in stressed or heat shocked cells, otherwise found as a homodimer.

It localises to the cytoplasm. Its subcellular location is the nucleus. Functionally, DNA-binding protein that specifically binds heat shock promoter elements (HSE) and activates transcription. In higher eukaryotes, HSF is unable to bind to the HSE unless the cells are heat shocked. This chain is Heat shock factor protein 2 (HSF2), found in Homo sapiens (Human).